Reading from the N-terminus, the 306-residue chain is Acetyl-coenzyme A carboxylase carboxyl transferase subunit beta (306 aa).

Positions 25-294 constitute a CoA carboxyltransferase N-terminal domain; sequence LWIKDPTSGE…VVNPSNTSST (270 aa). Low complexity predominate over residues 287–296; sequence NPSNTSSTNS. The tract at residues 287–306 is disordered; sequence NPSNTSSTNSQASLSKAEAA.

Belongs to the AccD/PCCB family. Acetyl-CoA carboxylase is a heterohexamer composed of biotin carboxyl carrier protein (AccB), biotin carboxylase (AccC) and two subunits each of ACCase subunit alpha (AccA) and ACCase subunit beta (AccD).

The protein localises to the cytoplasm. The enzyme catalyses N(6)-carboxybiotinyl-L-lysyl-[protein] + acetyl-CoA = N(6)-biotinyl-L-lysyl-[protein] + malonyl-CoA. The protein operates within lipid metabolism; malonyl-CoA biosynthesis; malonyl-CoA from acetyl-CoA: step 1/1. Functionally, component of the acetyl coenzyme A carboxylase (ACC) complex. Biotin carboxylase (BC) catalyzes the carboxylation of biotin on its carrier protein (BCCP) and then the CO(2) group is transferred by the transcarboxylase to acetyl-CoA to form malonyl-CoA. In Bartonella henselae (strain ATCC 49882 / DSM 28221 / CCUG 30454 / Houston 1) (Rochalimaea henselae), this protein is Acetyl-coenzyme A carboxylase carboxyl transferase subunit beta.